Reading from the N-terminus, the 88-residue chain is Apolipoprotein C-I (88 aa).

The N-terminal stretch at 1–26 is a signal peptide; that stretch reads MRLFISLPVLIVVLAMALEGPAPAQA.

The protein belongs to the apolipoprotein C1 family.

The protein resides in the secreted. Functionally, inhibitor of lipoprotein binding to the low density lipoprotein (LDL) receptor, LDL receptor-related protein, and very low density lipoprotein (VLDL) receptor. Associates with high density lipoproteins (HDL) and the triacylglycerol-rich lipoproteins in the plasma and makes up about 10% of the protein of the VLDL and 2% of that of HDL. Appears to interfere directly with fatty acid uptake and is also the major plasma inhibitor of cholesteryl ester transfer protein (CETP). Modulates the interaction of APOE with beta-migrating VLDL and inhibits binding of beta-VLDL to the LDL receptor-related protein. Binds free fatty acids and reduces their intracellular esterification. The protein is Apolipoprotein C-I (APOC1) of Myodes glareolus (Bank vole).